The chain runs to 167 residues: Small ribosomal subunit protein uS5 (167 aa).

The S5 DRBM domain maps to 12-75 (LQEKLITVNR…EKARRNMVTI (64 aa)).

This sequence belongs to the universal ribosomal protein uS5 family. Part of the 30S ribosomal subunit. Contacts proteins S4 and S8.

With S4 and S12 plays an important role in translational accuracy. Its function is as follows. Located at the back of the 30S subunit body where it stabilizes the conformation of the head with respect to the body. This is Small ribosomal subunit protein uS5 from Buchnera aphidicola subsp. Schizaphis graminum (strain Sg).